The following is an 878-amino-acid chain: Alanine--tRNA ligase (878 aa).

Zn(2+) is bound by residues histidine 566, histidine 570, cysteine 668, and histidine 672.

This sequence belongs to the class-II aminoacyl-tRNA synthetase family. The cofactor is Zn(2+).

The protein resides in the cytoplasm. The catalysed reaction is tRNA(Ala) + L-alanine + ATP = L-alanyl-tRNA(Ala) + AMP + diphosphate. Catalyzes the attachment of alanine to tRNA(Ala) in a two-step reaction: alanine is first activated by ATP to form Ala-AMP and then transferred to the acceptor end of tRNA(Ala). Also edits incorrectly charged Ser-tRNA(Ala) and Gly-tRNA(Ala) via its editing domain. This chain is Alanine--tRNA ligase, found in Bacillus velezensis (strain DSM 23117 / BGSC 10A6 / LMG 26770 / FZB42) (Bacillus amyloliquefaciens subsp. plantarum).